Here is a 673-residue protein sequence, read N- to C-terminus: Ion-translocating oxidoreductase complex subunit C (673 aa).

4Fe-4S ferredoxin-type domains lie at 368–397 (MGAP…QQLY) and 407–436 (KATA…VQYF). Residues C377, C380, C383, C387, C416, C419, C422, and C426 each contribute to the [4Fe-4S] cluster site. Disordered regions lie at residues 534-553 (QARA…SGGA) and 563-653 (IARA…AAVA).

Belongs to the 4Fe4S bacterial-type ferredoxin family. RnfC subfamily. As to quaternary structure, the complex is composed of six subunits: RsxA, RsxB, RsxC, RsxD, RsxE and RsxG. Requires [4Fe-4S] cluster as cofactor.

The protein resides in the cell inner membrane. In terms of biological role, part of a membrane-bound complex that couples electron transfer with translocation of ions across the membrane. Required to maintain the reduced state of SoxR. The sequence is that of Ion-translocating oxidoreductase complex subunit C from Salmonella gallinarum (strain 287/91 / NCTC 13346).